A 160-amino-acid polypeptide reads, in one-letter code: Cytochrome b6-f complex subunit 4 (160 aa).

Residues 1–35 (MATLKKPDLSDPKLRAKLAKGMGHNYYGEPAWPND) are Cytoplasmic-facing. A helical membrane pass occupies residues 36–56 (LLYVFPVVIMGTFACIVALSV). Topologically, residues 57 to 94 (LDPAMVGEPADPFATPLEILPEWYLYPVFQILRSVPNK) are lumenal, thylakoid. A helical membrane pass occupies residues 95 to 115 (LLGVLLMASVPLGLILVPFIE). Residues 116-130 (NVNKFQNPFRRPVAT) are Cytoplasmic-facing. A helical membrane pass occupies residues 131–151 (TIFLFGTLVTIWLGIGATFPL). Residues 152–160 (DKTLTLGLF) are Lumenal, thylakoid-facing.

This sequence belongs to the cytochrome b family. PetD subfamily. The 4 large subunits of the cytochrome b6-f complex are cytochrome b6, subunit IV (17 kDa polypeptide, PetD), cytochrome f and the Rieske protein, while the 4 small subunits are PetG, PetL, PetM and PetN. The complex functions as a dimer.

It is found in the cellular thylakoid membrane. In terms of biological role, component of the cytochrome b6-f complex, which mediates electron transfer between photosystem II (PSII) and photosystem I (PSI), cyclic electron flow around PSI, and state transitions. The sequence is that of Cytochrome b6-f complex subunit 4 from Mastigocladus laminosus (Fischerella sp.).